The sequence spans 465 residues: Siroheme synthase (465 aa).

The tract at residues 1 to 203 is precorrin-2 dehydrogenase /sirohydrochlorin ferrochelatase; it reads MDFLPLFHSL…GRPAEAERLL (203 aa). Residues 22–23 and 43–44 each bind NAD(+); these read EV and PQ. The residue at position 128 (S128) is a Phosphoserine. The interval 217-465 is uroporphyrinogen-III C-methyltransferase; it reads GEVYLVGAGP…AWFEGAREDA (249 aa). P226 is a binding site for S-adenosyl-L-methionine. The active-site Proton acceptor is the D249. K271 acts as the Proton donor in catalysis. S-adenosyl-L-methionine contacts are provided by residues 302–304, I307, 332–333, M384, and G413; these read GGD and TA.

This sequence in the N-terminal section; belongs to the precorrin-2 dehydrogenase / sirohydrochlorin ferrochelatase family. The protein in the C-terminal section; belongs to the precorrin methyltransferase family.

It carries out the reaction uroporphyrinogen III + 2 S-adenosyl-L-methionine = precorrin-2 + 2 S-adenosyl-L-homocysteine + H(+). The enzyme catalyses precorrin-2 + NAD(+) = sirohydrochlorin + NADH + 2 H(+). The catalysed reaction is siroheme + 2 H(+) = sirohydrochlorin + Fe(2+). It functions in the pathway cofactor biosynthesis; adenosylcobalamin biosynthesis; precorrin-2 from uroporphyrinogen III: step 1/1. The protein operates within cofactor biosynthesis; adenosylcobalamin biosynthesis; sirohydrochlorin from precorrin-2: step 1/1. Its pathway is porphyrin-containing compound metabolism; siroheme biosynthesis; precorrin-2 from uroporphyrinogen III: step 1/1. It participates in porphyrin-containing compound metabolism; siroheme biosynthesis; siroheme from sirohydrochlorin: step 1/1. It functions in the pathway porphyrin-containing compound metabolism; siroheme biosynthesis; sirohydrochlorin from precorrin-2: step 1/1. Multifunctional enzyme that catalyzes the SAM-dependent methylations of uroporphyrinogen III at position C-2 and C-7 to form precorrin-2 via precorrin-1. Then it catalyzes the NAD-dependent ring dehydrogenation of precorrin-2 to yield sirohydrochlorin. Finally, it catalyzes the ferrochelation of sirohydrochlorin to yield siroheme. The sequence is that of Siroheme synthase from Pseudomonas aeruginosa (strain ATCC 15692 / DSM 22644 / CIP 104116 / JCM 14847 / LMG 12228 / 1C / PRS 101 / PAO1).